The chain runs to 362 residues: MQESGLKPILWTNKELILLDQRVLPGTTSYLKAKTLEDCIFAIREMVVRGAPAIAITGAFGIALYLNGLSSQPTFSQLKTKLDELLESRPTAVNLRLVIEEFFSRFPEADYSSANLEKMQKSAEEFALFMLEEDLENNLTLSKNALSLFPKSPSSLNIITHCNTGALATAGHGTALGVIRSLRDAGHSLTVFADETRPYLQGARLTAWELKEEGIPSYLITDNMAGWVMSSRKIHAVIVGADRIASNGDTANKIGTYPLAIIAKHHGVPFYVAATSKSMDFRIPDGSHIPIEMRKENEVTSFGFLKDATGKPLLNEGVLAPNGIKALNPSFDVTPASLISGIITERGIISPVTEENLRKTFS.

Residues 49–51 (RGA), Arg-89, and Gln-201 contribute to the substrate site. The Proton donor role is filled by Asp-242. 252–253 (NK) contributes to the substrate binding site.

Belongs to the eIF-2B alpha/beta/delta subunits family. MtnA subfamily.

It catalyses the reaction 5-(methylsulfanyl)-alpha-D-ribose 1-phosphate = 5-(methylsulfanyl)-D-ribulose 1-phosphate. The protein operates within amino-acid biosynthesis; L-methionine biosynthesis via salvage pathway; L-methionine from S-methyl-5-thio-alpha-D-ribose 1-phosphate: step 1/6. Functionally, catalyzes the interconversion of methylthioribose-1-phosphate (MTR-1-P) into methylthioribulose-1-phosphate (MTRu-1-P). This is Methylthioribose-1-phosphate isomerase from Leptospira borgpetersenii serovar Hardjo-bovis (strain JB197).